The sequence spans 129 residues: Ribonuclease VapC12 (129 aa).

Mg(2+) is bound by residues D5 and D94.

This sequence belongs to the PINc/VapC protein family. Mg(2+) is required as a cofactor.

In terms of biological role, toxic component of a type II toxin-antitoxin (TA) system. An RNase. The cognate antitoxin is VapB12. The polypeptide is Ribonuclease VapC12 (Mycobacterium tuberculosis (strain CDC 1551 / Oshkosh)).